Here is a 1244-residue protein sequence, read N- to C-terminus: MQKSVRYNEGHALFLSVIARKEGTKRGYLSKKTTENSKWHEKFFALYQNVLFYFDTDQSARPSGIYLLEGCTCERVPALKVSTVGKDALDKLQYFLVVFGHDGQKPLELRTEEESDCDEWVEAIQQASYSDIIIEREVLMQKYIHLVQIVETEKVAANQLRTQLEDQDTEIERLKAEIIALNKTKERMRPYHVFQEEEDPDIKKIKKVQSFMRGWLCRRKWKIIVQDYICSPHAESMRKRNQIVFNMVEAETEYVHQLSILVNCFLRPLRMAASSKKPPISHDDVSSIFLNSETIMFLHEIFHQGLKARIANWPTLVLADLFDILLPMLNIYQEFVRNHQYSLQVLANCKQNRDFDKLLKQYESNAACEGRMLETFLTYPMFQIPRYIITLHELLAHTPHEHVERKSLEFAKSKLEELSRVMHDEVSDTENIRKNLAIERMIVEGCDILLDTSQTFVRQGSLIQLPSVERGKLSKVRLGSLSLKKEGERQCFLFTKHFLICTRSSGGKLHLLKQGGVLSLIECTLIEEPDANDEDAKNSGQVFGHLDFKIVVEPSDAPAFTVVLLAPSRQEKAAWTSDISQCIDNIRCNGLMTSVFEENSKVTVPHMIKSDARLHKDDVDICFSKTLNSCKVPQIRYASVERLLERLTDLRFLSIDFLNTFLHTYRIFTTATVVMEKLADIYKKPFTSIPVRSLELFFATNQNNRSGDHVNDKSPRLCRKFSSPPPLSISSRTSSPVRTRKLSLNSPIGSKVGILDLSTTSSSAASSPTSANPTISPPPSNNNNNSKPPLDLSRGQSPSSPEQSPGALDDNAEVPRIDALCGKLRRSIRRAVLESVSLDKFIPESPQASEPGEISPCRSPSTPRHLRYRQSGVQTAENSRCSVSPASAFAIATAAAGHSSPPVFNNSERTCDKEFIIRRAATNRVLNVLRHWVSKHSQDFEMNGELKMGVICLLEEVLRDPDLLPQERKATANILSALSQDDQDDAQLKIEDILQMAECPKAECFESLSAMEIAEQITLLDHIVFRSIPYEEFLGQGWMKTDKTERTPYIMKTSQHFNDMSNLVASQIMSHTDVGSRAGSIEKWVAVADICRCLNNYNGVLEITSALNRSAIYRLKKTWAKVCKQTKALMDKLQKTVSSEGRFKNLRETLKNCNPPCVPYLGMYLTDLAFIEEGTPNFTEEGLVNFSKMRMISHIIREIRQFQQTPYRIEHQPKVTQYLLDKTLIMDEDTLYDLSLKIEPRLPA.

The PH 1 domain maps to 22-129; it reads EGTKRGYLSK…WVEAIQQASY (108 aa). Residues 147-189 are a coiled coil; that stretch reads VQIVETEKVAANQLRTQLEDQDTEIERLKAEIIALNKTKERMR. An IQ domain is found at 201 to 230; sequence DIKKIKKVQSFMRGWLCRRKWKIIVQDYIC. Residues 239 to 425 enclose the DH domain; sequence KRNQIVFNMV…EELSRVMHDE (187 aa). A PH 2 domain is found at 466 to 584; sequence PSVERGKLSK…WTSDISQCID (119 aa). The N-terminal Ras-GEF domain occupies 631–745; sequence KVPQIRYASV…PVRTRKLSLN (115 aa). Disordered stretches follow at residues 704–743, 759–814, and 843–879; these read NRSG…RKLS, TTSS…NAEV, and PESP…AENS. The segment covering 706–715 has biased composition (basic and acidic residues); the sequence is SGDHVNDKSP. Positions 728 to 743 are enriched in polar residues; the sequence is SISSRTSSPVRTRKLS. Low complexity-rich tracts occupy residues 759–774 and 781–806; these read TTSS…ANPT and NNNN…QSPG. The 233-residue stretch at 1009–1241 folds into the Ras-GEF domain; it reads SAMEIAEQIT…YDLSLKIEPR (233 aa).

It localises to the cytoplasm. The protein localises to the cell membrane. Its subcellular location is the endoplasmic reticulum membrane. In terms of biological role, functions as a calcium-regulated nucleotide exchange factor activating both Ras and rac1 through the exchange of bound GDP for GTP. May function in synaptic plasticity. The sequence is that of Ras-specific guanine nucleotide-releasing factor 2 (rasgrf2) from Danio rerio (Zebrafish).